Here is a 462-residue protein sequence, read N- to C-terminus: UDP-N-acetylmuramate--L-alanine ligase (462 aa).

119 to 125 (GTHGKTT) contacts ATP.

This sequence belongs to the MurCDEF family.

It is found in the cytoplasm. It carries out the reaction UDP-N-acetyl-alpha-D-muramate + L-alanine + ATP = UDP-N-acetyl-alpha-D-muramoyl-L-alanine + ADP + phosphate + H(+). It participates in cell wall biogenesis; peptidoglycan biosynthesis. Cell wall formation. The protein is UDP-N-acetylmuramate--L-alanine ligase of Parabacteroides distasonis (strain ATCC 8503 / DSM 20701 / CIP 104284 / JCM 5825 / NCTC 11152).